A 939-amino-acid polypeptide reads, in one-letter code: AP-2 complex subunit alpha (939 aa).

Residues 623–633 show a composition bias toward basic and acidic residues; the sequence is RVPENEIRESK. A disordered region spans residues 623–660; sequence RVPENEIRESKSPAPTSGPGSVLQNNVHVNNSHSKLNN. Positions 635-660 are enriched in polar residues; it reads PAPTSGPGSVLQNNVHVNNSHSKLNN.

This sequence belongs to the adapter complexes large subunit family. In terms of assembly, adaptor protein complex 2 (AP-2) is a heterotetramer composed of two large adaptins (alpha-type and beta-type subunits), a medium adaptin (mu-type subunit AP50) and a small adaptin (sigma-type subunit AP17).

The protein resides in the cell membrane. Its subcellular location is the membrane. The protein localises to the coated pit. In terms of biological role, adaptins are components of the adapter complexes which link clathrin to receptors in coated vesicles. Clathrin-associated protein complexes are believed to interact with the cytoplasmic tails of membrane proteins, leading to their selection and concentration. Alpha adaptin is a subunit of the plasma membrane adapter. This chain is AP-2 complex subunit alpha, found in Drosophila pseudoobscura pseudoobscura (Fruit fly).